Here is a 1433-residue protein sequence, read N- to C-terminus: DNA-directed RNA polymerase subunit beta' (1433 aa).

Positions 60, 62, 75, and 78 each coordinate Zn(2+). 3 residues coordinate Mg(2+): D449, D451, and D453. C777, C851, C858, and C861 together coordinate Zn(2+). 2 stretches are compositionally biased toward acidic residues: residues 1383 to 1393 (DSEEEEEELSE) and 1411 to 1433 (EEDEDEDELEEEADDSDDEDDDD). The disordered stretch occupies residues 1383-1433 (DSEEEEEELSELSEAAPVSTATLSKLVAEEDEDEDELEEEADDSDDEDDDD).

Belongs to the RNA polymerase beta' chain family. As to quaternary structure, the RNAP catalytic core consists of 2 alpha, 1 beta, 1 beta' and 1 omega subunit. When a sigma factor is associated with the core the holoenzyme is formed, which can initiate transcription. It depends on Mg(2+) as a cofactor. Zn(2+) serves as cofactor.

The enzyme catalyses RNA(n) + a ribonucleoside 5'-triphosphate = RNA(n+1) + diphosphate. In terms of biological role, DNA-dependent RNA polymerase catalyzes the transcription of DNA into RNA using the four ribonucleoside triphosphates as substrates. This is DNA-directed RNA polymerase subunit beta' from Leptospira biflexa serovar Patoc (strain Patoc 1 / Ames).